The primary structure comprises 370 residues: Type II restriction enzyme MjaII (370 aa).

It belongs to the TdeIII type II restriction endonuclease family.

It catalyses the reaction Endonucleolytic cleavage of DNA to give specific double-stranded fragments with terminal 5'-phosphates.. Functionally, a P subtype restriction enzyme that recognizes the double-stranded sequence 5'-GGNCC-3'; the cleavage site is unknown. This is Type II restriction enzyme MjaII (mjaIIR) from Methanocaldococcus jannaschii (strain ATCC 43067 / DSM 2661 / JAL-1 / JCM 10045 / NBRC 100440) (Methanococcus jannaschii).